Reading from the N-terminus, the 910-residue chain is Short transient receptor potential channel 3 (910 aa).

The segment at methionine 1–alanine 93 is disordered. At methionine 1–phenylalanine 448 the chain is on the cytoplasmic side. Acidic residues predominate over residues proline 19–glycine 29. Residues proline 48 to glycine 58 show a composition bias toward pro residues. Residues proline 59–serine 68 show a composition bias toward low complexity. 4 ANK repeats span residues alanine 100–valine 129, methionine 135–isoleucine 164, aspartate 166–serine 192, and proline 221–arginine 250. A Ca(2+)-binding site is contributed by glutamate 147. A helical membrane pass occupies residues valine 449–alanine 466. Topologically, residues serine 467 to threonine 497 are extracellular. The N-linked (GlcNAc...) asparagine glycan is linked to asparagine 478. Residues tryptophan 498–lysine 516 traverse the membrane as a helical segment. Ca(2+) contacts are provided by glutamate 514, glutamate 517, and asparagine 532. Residues glutamate 517–glutamine 529 are Cytoplasmic-facing. A helical transmembrane segment spans residues leucine 530–leucine 551. At alanine 552–aspartate 595 the chain is on the extracellular side. The helical transmembrane segment at proline 596–leucine 619 threads the bilayer. Residues proline 620–aspartate 638 lie on the Cytoplasmic side of the membrane. The stretch at glutamate 623–alanine 652 is one ANK 5 repeat. Residues isoleucine 639–serine 662 form a helical membrane-spanning segment. Over tyrosine 663–histidine 702 the chain is Extracellular. A helical membrane pass occupies residues lysine 703 to leucine 728. The Cytoplasmic segment spans residues isoleucine 729–glutamate 910. Ca(2+)-binding residues include glutamate 860, glutamate 863, glutamate 865, and aspartate 872.

The protein belongs to the transient receptor (TC 1.A.4) family. STrpC subfamily. TRPC3 sub-subfamily. In terms of assembly, homotetramer. Interacts with ITPR1, ITPR3, MX1 and RNF24. Interacts with JPH2; the interaction is involved in maintaining Ca(2+) homeostasis in skeletal muscle and is mediated by JPH2 'Ser-165' phosphorylation. Abundantly expressed in brain. Concentrated in cerebellar Purkinje cells and sparsely localized in cerebellar granule lyer, pontine nuclei and thalamus. Lower levels detected in other tissues.

It is found in the cell membrane. The enzyme catalyses Ca(2+)(in) = Ca(2+)(out). Activated by diacylglycerol (DAG) in a membrane-delimited fashion, independently of protein kinase C. Activated by inositol 1,4,5-triphosphate receptors (ITPR) with bound IP3. May be activated by internal calcium store depletion. Inhibited by intracellular Ca(2+). Its function is as follows. Forms a receptor-activated non-selective calcium permeant cation channel. May be operated by a phosphatidylinositol second messenger system activated by receptor tyrosine kinases or G-protein coupled receptors. The protein is Short transient receptor potential channel 3 (Trpc3) of Mus musculus (Mouse).